Reading from the N-terminus, the 1271-residue chain is Period circadian protein (1271 aa).

Over residues 1-14 (MEGESTESTQNTKV) the composition is skewed to polar residues. Positions 1-102 (MEGESTESTQ…AEEQPHSSGT (102 aa)) are disordered. Low complexity predominate over residues 15-46 (SDSAYSNSCSNSQSQRSGSSKSMLSGSHSSGS). The Nuclear localization signal motif lies at 65–78 (KRNKEKSRKKKKAK). A compositionally biased stretch (basic residues) spans 65–78 (KRNKEKSRKKKKAK). The segment covering 80 to 90 (TQAQATISSSL) has biased composition (polar residues). 2 PAS domains span residues 189-259 (TGPA…IPIA) and 339-409 (YRVP…MKKG). The segment at 596-660 (APVEVDPPKV…TNTSNAGTGT (65 aa)) is disordered. 3 tandem repeats follow at residues 657 to 658 (GT), 659 to 660 (GT), and 661 to 662 (GT). Residues 657–677 (GTGTGTVTGTGTIIATSGTGT) are 8 X 2 AA approximate tandem repeats of G-T. The 4; approximate repeat unit spans residues 663 to 664 (VT). Repeat copies occupy residues 665–666 (GT), 667–668 (GT), 674–675 (GT), and 676–677 (GT). Composition is skewed to polar residues over residues 746-772 (GAEN…NSAA) and 781-803 (GPDN…SGAE). 5 disordered regions span residues 746–913 (GAEN…VEKN), 928–956 (EYSS…PKQQ), 1014–1050 (PAPG…QQAA), 1143–1191 (TPAQ…NSNQ), and 1227–1271 (KTTD…HGDG). Basic and acidic residues-rich tracts occupy residues 805–822 (SRAE…HPRP) and 831–841 (RPDKTGPDKSG). Residues 864 to 884 (QDTRTTAGTPDSPPVSLTESL) are compositionally biased toward polar residues. 2 stretches are compositionally biased toward basic and acidic residues: residues 885-896 (LNKHNDEMEKFM) and 903-913 (SRGDRRTVEKN). Residues 1014–1023 (PAPGALSPTP) are compositionally biased toward low complexity. The segment covering 1025–1036 (NQKHHHHAHQHA) has biased composition (basic residues). Residues 1143 to 1167 (TPAQLQRPSSQDTSVKTEPASNATP) are compositionally biased toward polar residues. Residues 1257-1271 (IMEHPEEDQTQHGDG) show a composition bias toward basic and acidic residues.

As to quaternary structure, forms a heterodimer with timeless (TIM); the complex then translocates into the nucleus. In terms of processing, phosphorylated with a circadian rhythmicity, probably by the double-time protein (dbt). Phosphorylation could be implicated in the stability of per monomer and in the formation of heterodimer per-tim.

The protein localises to the nucleus. Its subcellular location is the cytoplasm. It localises to the perinuclear region. Essential for biological clock functions. Determines the period length of circadian and ultradian rhythms; an increase in PER dosage leads to shortened circadian rhythms and a decrease leads to lengthened circadian rhythms. Essential for the circadian rhythmicity of locomotor activity, eclosion behavior, and for the rhythmic component of the male courtship song that originates in the thoracic nervous system. The biological cycle depends on the rhythmic formation and nuclear localization of the TIM-PER complex. Light induces the degradation of TIM, which promotes elimination of PER. Nuclear activity of the heterodimer coordinatively regulates PER and TIM transcription through a negative feedback loop. Behaves as a negative element in circadian transcriptional loop. Does not appear to bind DNA, suggesting indirect transcriptional inhibition. This Drosophila pseudoobscura pseudoobscura (Fruit fly) protein is Period circadian protein (per).